We begin with the raw amino-acid sequence, 272 residues long: Shikimate dehydrogenase (NADP(+)) (272 aa).

Shikimate contacts are provided by residues 14–16 (SKS) and Thr61. Lys65 functions as the Proton acceptor in the catalytic mechanism. Residue Glu77 participates in NADP(+) binding. The shikimate site is built by Asn86 and Asp102. NADP(+)-binding positions include 126-130 (GAGGA), 149-154 (NRTVSR), and Met213. A shikimate-binding site is contributed by Tyr215. Gly237 is an NADP(+) binding site.

Belongs to the shikimate dehydrogenase family. In terms of assembly, homodimer.

The enzyme catalyses shikimate + NADP(+) = 3-dehydroshikimate + NADPH + H(+). The protein operates within metabolic intermediate biosynthesis; chorismate biosynthesis; chorismate from D-erythrose 4-phosphate and phosphoenolpyruvate: step 4/7. Involved in the biosynthesis of the chorismate, which leads to the biosynthesis of aromatic amino acids. Catalyzes the reversible NADPH linked reduction of 3-dehydroshikimate (DHSA) to yield shikimate (SA). The protein is Shikimate dehydrogenase (NADP(+)) of Escherichia coli (strain SMS-3-5 / SECEC).